A 343-amino-acid polypeptide reads, in one-letter code: Adenosine kinase (343 aa).

Residue D296 is part of the active site.

The protein belongs to the carbohydrate kinase PfkB family. It depends on Mg(2+) as a cofactor.

It catalyses the reaction adenosine + ATP = AMP + ADP + H(+). Its pathway is purine metabolism; AMP biosynthesis via salvage pathway; AMP from adenosine: step 1/1. ATP dependent phosphorylation of adenosine and other related nucleoside analogs to monophosphate derivatives. Can also act on the cytokinin isopentenyladenosine to produce isopentenyladenosine monophosphate. This is Adenosine kinase (ADK) from Physcomitrium patens (Spreading-leaved earth moss).